A 543-amino-acid chain; its full sequence is ATP synthase subunit alpha (543 aa).

174-181 contributes to the ATP binding site; that stretch reads GDRQTGKT.

It belongs to the ATPase alpha/beta chains family. In terms of assembly, F-type ATPases have 2 components, CF(1) - the catalytic core - and CF(0) - the membrane proton channel. CF(1) has five subunits: alpha(3), beta(3), gamma(1), delta(1), epsilon(1). CF(0) has three main subunits: a(1), b(2) and c(9-12). The alpha and beta chains form an alternating ring which encloses part of the gamma chain. CF(1) is attached to CF(0) by a central stalk formed by the gamma and epsilon chains, while a peripheral stalk is formed by the delta and b chains.

It localises to the cell membrane. It catalyses the reaction ATP + H2O + 4 H(+)(in) = ADP + phosphate + 5 H(+)(out). In terms of biological role, produces ATP from ADP in the presence of a proton gradient across the membrane. The alpha chain is a regulatory subunit. This is ATP synthase subunit alpha from Bifidobacterium longum subsp. infantis (strain ATCC 15697 / DSM 20088 / JCM 1222 / NCTC 11817 / S12).